Consider the following 219-residue polypeptide: Envelope protein UL45 homolog (219 aa).

At 1–57 (MEDYKLLQLETATVDAQAPPLPTKTVPVFAPPLSTPPQPNELVYTKRRRTKRKAKCR) the chain is on the intravirion side. The chain crosses the membrane as a helical; Signal-anchor for type II membrane protein span at residues 58-78 (CLFFTMGMFALGVLMTTAILV). The Virion surface portion of the chain corresponds to 79–219 (STFILTVPIG…RLDHIIPFPR (141 aa)). 3 N-linked (GlcNAc...) asparagine; by host glycosylation sites follow: Asn-113, Asn-120, and Asn-138.

It belongs to the herpesviridae HHV-1 UL45 family. Post-translationally, N-glycosylated.

The protein localises to the virion membrane. This Equine herpesvirus 1 (strain Ab4p) (EHV-1) protein is Envelope protein UL45 homolog.